We begin with the raw amino-acid sequence, 101 residues long: Urease subunit beta (101 aa).

Belongs to the urease beta subunit family. Heterotrimer of UreA (gamma), UreB (beta) and UreC (alpha) subunits. Three heterotrimers associate to form the active enzyme.

It is found in the cytoplasm. It catalyses the reaction urea + 2 H2O + H(+) = hydrogencarbonate + 2 NH4(+). It participates in nitrogen metabolism; urea degradation; CO(2) and NH(3) from urea (urease route): step 1/1. The chain is Urease subunit beta from Pseudomonas syringae pv. syringae (strain B728a).